The following is a 748-amino-acid chain: Phosphoenolpyruvate-dependent phosphotransferase system (748 aa).

The region spanning M1 to V127 is the GAF domain. The tract at residues Q128–R170 is linker. The interval I171–L748 is PTS EI. Catalysis depends on H356, which acts as the Tele-phosphohistidine intermediate. Phosphoenolpyruvate contacts are provided by R462 and R498. Residues E597 and D621 each contribute to the Mg(2+) site. Residues N620 to D621 and R631 contribute to the phosphoenolpyruvate site. C668 functions as the Proton donor in the catalytic mechanism.

Belongs to the PEP-utilizing enzyme family. Mg(2+) serves as cofactor.

The protein localises to the cytoplasm. It carries out the reaction L-histidyl-[protein] + phosphoenolpyruvate = N(pros)-phospho-L-histidyl-[protein] + pyruvate. Its activity is regulated as follows. Inhibited by GDP and FAD. Functionally, component of the phosphoenolpyruvate-dependent nitrogen-metabolic phosphotransferase system (nitrogen-metabolic PTS), that seems to be involved in regulating nitrogen metabolism. Enzyme I-Ntr transfers the phosphoryl group from phosphoenolpyruvate (PEP) to the phosphoryl carrier protein (NPr). Could function in the transcriptional regulation of sigma-54 dependent operons in conjunction with the NPr (PtsO) and EIIA-Ntr (PtsN) proteins. Enzyme I-Ntr is specific for NPr. In Escherichia coli (strain K12), this protein is Phosphoenolpyruvate-dependent phosphotransferase system (ptsP).